The following is a 161-amino-acid chain: Allophycocyanin alpha chain (161 aa).

Asn71 carries the post-translational modification N4-methylasparagine. Cys81 contributes to the (2R,3E)-phycocyanobilin binding site.

It belongs to the phycobiliprotein family. In terms of assembly, heterodimer of an alpha and a beta chain. Contains one covalently linked phycocyanobilin chromophore.

The protein localises to the plastid. It localises to the chloroplast thylakoid membrane. Light-harvesting photosynthetic bile pigment-protein from the phycobiliprotein complex. Allophycocyanin has a maximum absorption at approximately 650 nanometers. This Pyropia haitanensis (Red seaweed) protein is Allophycocyanin alpha chain (apcA).